A 192-amino-acid polypeptide reads, in one-letter code: MQKTISHAFPLGDVTWSNQGRLSIPNAHLESWLLNTGSLTQRLQTRCNDFKVQLVSQRQELATPAEYIQLGVSKMSQQKENWQVREVILHGDNQPWVFARSIIPQALCEADFLELGDKPLGHLIFNDDRFKRQPFQLMCLQPDEAFLHEYGLPPLTEIWGRRSVFCYQQYAMMVAELFLPKAPAYRDSNFDR.

Substrate contacts are provided by arginine 85, leucine 120, and glutamate 176.

Belongs to the UbiC family.

The protein localises to the cytoplasm. It carries out the reaction chorismate = 4-hydroxybenzoate + pyruvate. It participates in cofactor biosynthesis; ubiquinone biosynthesis. Removes the pyruvyl group from chorismate, with concomitant aromatization of the ring, to provide 4-hydroxybenzoate (4HB) for the ubiquinone pathway. The polypeptide is Probable chorismate pyruvate-lyase (Pseudoalteromonas atlantica (strain T6c / ATCC BAA-1087)).